A 134-amino-acid chain; its full sequence is Small ribosomal subunit protein uS8 (134 aa).

This sequence belongs to the universal ribosomal protein uS8 family. In terms of assembly, part of the 30S ribosomal subunit. Contacts proteins S5 and S12.

In terms of biological role, one of the primary rRNA binding proteins, it binds directly to 16S rRNA central domain where it helps coordinate assembly of the platform of the 30S subunit. This is Small ribosomal subunit protein uS8 from Thermotoga sp. (strain RQ2).